A 288-amino-acid polypeptide reads, in one-letter code: Syntaxin-1A (288 aa).

Basic and acidic residues predominate over residues 1 to 13; the sequence is MKDRTQELRTAKD. A disordered region spans residues 1 to 20; the sequence is MKDRTQELRTAKDSDDDDDV. Residues 1-265 are Cytoplasmic-facing; sequence MKDRTQELRT…KYQSKARRKK (265 aa). Ser-14, Ser-64, and Ser-95 each carry phosphoserine. Positions 68–109 form a coiled coil; it reads DEKTKEELEELMSDIKKTANKVRSKLKSIEQSIEQEEGLNRS. Residue Ser-188 is modified to Phosphoserine; by DAPK1. In terms of domain architecture, t-SNARE coiled-coil homology spans 192–254; the sequence is LSEIETRHSE…ERAVSDTKKA (63 aa). Glycyl lysine isopeptide (Lys-Gly) (interchain with G-Cter in SUMO) cross-links involve residues Lys-252, Lys-253, and Lys-256. A helical; Anchor for type IV membrane protein transmembrane segment spans residues 266 to 288; the sequence is IMIIICCVILGIIIASTIGGIFG.

The protein belongs to the syntaxin family. Part of the SNARE core complex containing SNAP25, VAMP2 and STX1A; this complex constitutes the basic catalytic machinery of the complex neurotransmitter release apparatus. The SNARE complex interacts with CPLX1. Interacts with STXBP1. The interaction with STXBP1 promotes assembly of the SNARE complex. Interacts (via C-terminus) with KCNB1 (via C-terminus); the interaction increases in a calcium-dependent manner and induces a pore-independent enhancement of exocytosis in neuroendocrine cells, chromaffin cells, pancreatic beta cells and from the soma of dorsal root ganglia (DRG) neurons. Interacts with SYTL4. Interacts with STXBP6. Interacts with PLCL1 (via C2 domain). Interacts with OTOF. Interacts with LGI3. Interacts (via the H3 domain) with SLC6A4 (via the N-terminus); this interaction regulates SLC4A6 channel conductance in thalamocortical neurons. Interacts with SYT6 and SYT8; the interaction is Ca(2+)-dependent. Interacts with VAMP8. Interacts with SNAP23. Interacts with VAPA and SYBU. Interacts with PRRT2. Interacts with SEPT8. Interacts with STXBP5L. Interacts with synaptotagmin-1/SYT1. Interacts with SEPTIN5; in the cerebellar cortex. Interacts with SEPTIN4; in the striatum. Post-translationally, phosphorylated by CK2. Phosphorylation at Ser-188 by DAPK1 significantly decreases its interaction with STXBP1. In terms of processing, (Microbial infection) Targeted and hydrolyzed by C.botulinum neurotoxin type C (BoNT/C), which hydrolyzes the 253-Lys-|-Ala-254 bond. Cleavage inhibits neurotransmitter release. Phosphorylated by CK2. Phosphorylation at Ser-188 by DAPK1 significantly decreases its interaction with STXBP1. Post-translationally, sumoylated, sumoylation is required for regulation of synaptic vesicle endocytosis. As to expression, expressed predominantly in cerebral cortex, hippocampus, cerebellum, adrenal medulla and retina with weak expression detected in non-neuronal tissues.

It is found in the cytoplasmic vesicle. The protein localises to the secretory vesicle. Its subcellular location is the synaptic vesicle membrane. It localises to the cell membrane. The protein resides in the synapse. It is found in the synaptosome. Its function is as follows. Plays an essential role in hormone and neurotransmitter calcium-dependent exocytosis and endocytosis. Part of the SNARE (Soluble NSF Attachment Receptor) complex composed of SNAP25, STX1A and VAMP2 which mediates the fusion of synaptic vesicles with the presynaptic plasma membrane. STX1A and SNAP25 are localized on the plasma membrane while VAMP2 resides in synaptic vesicles. The pairing of the three SNAREs from the N-terminal SNARE motifs to the C-terminal anchors leads to the formation of the SNARE complex, which brings membranes into close proximity and results in final fusion. Participates in the calcium-dependent regulation of acrosomal exocytosis in sperm. Also plays an important role in the exocytosis of hormones such as insulin or glucagon-like peptide 1 (GLP-1). The sequence is that of Syntaxin-1A (Stx1a) from Rattus norvegicus (Rat).